A 462-amino-acid chain; its full sequence is MSNRMWGGRFASGPAEIMEEINASIGFDKRLAPQDIRGSLAHVAMLGKTGILPQADVAAIEAGLKTVQAEIESGAFTFQRALEDIHMNVESRLTELVGPAAGRLHTARSRNDQVATDMRLWVRDTLDALDAQAADLQRALAALALAHSGTVMPGFTHLQSAQPVTFGHHLLAYVEMLGRDRGRFRDARARLNECPLGAAALAGTSFPIDRHATAAALGFDRPTANSLDSVADRDFALEALAAAAIAAVHLSRFAEEIVVWTSAQFGFVRLSDRYTTGSSIMPQKRNPDAAELVRAKAGRVIGALAGLLIVMKGLPLAYSKDMQEDKEGTFDALQTLSLCLAAMTGMVRDLEPVPEVLKAAAGAGYATATDLADWLVRELGLPFRDAHHVTGRLVGRASARGVGLEALSLAEMREEEPRITEAVYAVLGVENSVASRTSYGGTAPANVRAQAERWLAALGDTQ.

Belongs to the lyase 1 family. Argininosuccinate lyase subfamily.

The protein localises to the cytoplasm. It catalyses the reaction 2-(N(omega)-L-arginino)succinate = fumarate + L-arginine. The protein operates within amino-acid biosynthesis; L-arginine biosynthesis; L-arginine from L-ornithine and carbamoyl phosphate: step 3/3. In Methylobacterium sp. (strain 4-46), this protein is Argininosuccinate lyase.